We begin with the raw amino-acid sequence, 225 residues long: Glucose-induced degradation protein 8 homolog (225 aa).

One can recognise a LisH domain in the interval 22 to 54; it reads QRAEMNRLIMDYLVTEGYKEAAEKFRIESGTQP. In terms of domain architecture, CTLH spans 60-117; it reads SLDDRIKIREAVQKGDLEQAVSMTNKLNPDILDSNQQLYFHLQQQRLIELIREKDIEA.

The protein belongs to the GID8 family.

The protein localises to the cytoplasm. It localises to the nucleus. Core component of the CTLH E3 ubiquitin-protein ligase complex that mediates ubiquitination and subsequent proteasomal degradation of target proteins. Acts as a positive regulator of Wnt signaling pathway by promoting beta-catenin (CTNNB1) nuclear accumulation. This Nematostella vectensis (Starlet sea anemone) protein is Glucose-induced degradation protein 8 homolog.